The following is a 493-amino-acid chain: Probable phospho-2-dehydro-3-deoxyheptonate aldolase, chloroplastic (493 aa).

Residues methionine 1–serine 58 constitute a chloroplast transit peptide.

Belongs to the class-II DAHP synthase family.

The protein localises to the plastid. The protein resides in the chloroplast. The catalysed reaction is D-erythrose 4-phosphate + phosphoenolpyruvate + H2O = 7-phospho-2-dehydro-3-deoxy-D-arabino-heptonate + phosphate. Its pathway is metabolic intermediate biosynthesis; chorismate biosynthesis; chorismate from D-erythrose 4-phosphate and phosphoenolpyruvate: step 1/7. This chain is Probable phospho-2-dehydro-3-deoxyheptonate aldolase, chloroplastic (DHS1), found in Catharanthus roseus (Madagascar periwinkle).